We begin with the raw amino-acid sequence, 1132 residues long: Phosphatidylinositide phosphatase SAC2 (1132 aa).

An SAC domain is found at 167-518 (LKMFMDSESF…GDSISRQYAG (352 aa)). The hSac2 domain occupies 593–760 (RSHQELISQL…KSSKPHEDII (168 aa)). Residues Ser827 and Ser830 each carry the phosphoserine modification. The segment at 846–875 (ESDGDMSSDNDSYHSDEFLTNSKSDEDRQL) is disordered. Basic and acidic residues predominate over residues 856–874 (DSYHSDEFLTNSKSDEDRQ). Phosphoserine is present on residues Ser878, Ser881, Ser907, and Ser910. 2 disordered regions span residues 923–942 (VAHG…KSPS) and 974–1017 (LSET…LDVS). Ser1103 bears the Phosphoserine mark.

As to quaternary structure, homodimer. Interacts with OCRL and RAB5A. Interacts with INPP5B and INPP4A. Interacts with STAT3; the interaction is independent of STAT3 'Tyr-705' phosphorylation status. In terms of tissue distribution, ubiquitous. Highly expressed in brain.

Its subcellular location is the membrane. The protein resides in the clathrin-coated pit. The protein localises to the early endosome. It is found in the recycling endosome. The enzyme catalyses a myo-inositol phosphate + H2O = myo-inositol + phosphate. Functionally, inositol 4-phosphatase which mainly acts on phosphatidylinositol 4-phosphate. May be functionally linked to OCRL, which converts phosphatidylinositol 4,5-bisphosphate to phosphatidylinositol, for a sequential dephosphorylation of phosphatidylinositol 4,5-bisphosphate at the 5 and 4 position of inositol, thus playing an important role in the endocytic recycling. Regulator of TF:TFRC and integrins recycling pathway, is also involved in cell migration mechanisms. Modulates AKT/GSK3B pathway by decreasing AKT and GSK3B phosphorylation. Negatively regulates STAT3 signaling pathway through inhibition of STAT3 phosphorylation and translocation to the nucleus. Functionally important modulator of cardiac myocyte size and of the cardiac response to stress. May play a role as negative regulator of axon regeneration after central nervous system injuries. This is Phosphatidylinositide phosphatase SAC2 from Homo sapiens (Human).